Consider the following 432-residue polypeptide: MGKNVVVLGTQWGDEGKGKVVDLLTERAKYVVRYQGGHNAGHTLVINGEKTVLHLIPSGILRENVISIIGNGVVLAPDALMKEMTELEARGVPVRERLLLSEACPLILPYHVALDNAREKARGAKAIGTTGRGIGPAYEDKVARRGLRVSDLFNKETFAIKLKEIVEYHNFQLVHYYKEAAVDYQKVLDDVLAIADILTAMVVDVSELLDNARKQGELIMFEGAQGTLLDIDHGTYPYVTSSNTTAGGVATGSGLGPRYVDYVLGIVKAYSTRVGAGPFPTELNDETGEFLRKQGNEYGATTGRSRRTGWLDIVAVRRAVQINSLSGFCMTKLDVLDGLKEVKLCVGYRMPDGREVDTTPLAAEGWEGIEPIYETMPGWSETTFGVKEHSKLPQAALNYIQRVEELTGVPIDIISTGPDRDETMILRDPFDA.

Residues 13–19 (GDEGKGK) and 41–43 (GHT) contribute to the GTP site. D14 serves as the catalytic Proton acceptor. Residues D14 and G41 each coordinate Mg(2+). Residues 14-17 (DEGK), 39-42 (NAGH), T130, R144, Q225, T240, and R304 each bind IMP. Catalysis depends on H42, which acts as the Proton donor. Position 300–306 (300–306 (ATTGRSR)) interacts with substrate. Residues R306, 332 to 334 (KLD), and 415 to 417 (STG) contribute to the GTP site.

The protein belongs to the adenylosuccinate synthetase family. In terms of assembly, homodimer. Mg(2+) is required as a cofactor.

The protein localises to the cytoplasm. The catalysed reaction is IMP + L-aspartate + GTP = N(6)-(1,2-dicarboxyethyl)-AMP + GDP + phosphate + 2 H(+). It functions in the pathway purine metabolism; AMP biosynthesis via de novo pathway; AMP from IMP: step 1/2. In terms of biological role, plays an important role in the de novo pathway of purine nucleotide biosynthesis. Catalyzes the first committed step in the biosynthesis of AMP from IMP. This Yersinia pestis bv. Antiqua (strain Antiqua) protein is Adenylosuccinate synthetase.